The following is a 234-amino-acid chain: Sugar fermentation stimulation protein A (234 aa).

Residues 201 to 220 constitute a DNA-binding region (H-T-H motif); sequence LLSEAQNKGVEVLAYKAELS.

This sequence belongs to the SfsA family.

Functionally, binds to DNA non-specifically. Could be a regulatory factor involved in maltose metabolism. In Salmonella choleraesuis (strain SC-B67), this protein is Sugar fermentation stimulation protein A.